The chain runs to 103 residues: Large ribosomal subunit protein uL24 (103 aa).

This sequence belongs to the universal ribosomal protein uL24 family. As to quaternary structure, part of the 50S ribosomal subunit.

Functionally, one of two assembly initiator proteins, it binds directly to the 5'-end of the 23S rRNA, where it nucleates assembly of the 50S subunit. One of the proteins that surrounds the polypeptide exit tunnel on the outside of the subunit. The protein is Large ribosomal subunit protein uL24 of Geobacillus stearothermophilus (Bacillus stearothermophilus).